Reading from the N-terminus, the 209-residue chain is Kynurenine formamidase (209 aa).

Trp20 lines the substrate pocket. Zn(2+)-binding residues include His50, His54, and Asp56. His60 acts as the Proton donor/acceptor in catalysis. 2 residues coordinate Zn(2+): His161 and Glu173.

Belongs to the Cyclase 1 superfamily. KynB family. In terms of assembly, homodimer. The cofactor is Zn(2+).

It carries out the reaction N-formyl-L-kynurenine + H2O = L-kynurenine + formate + H(+). It participates in amino-acid degradation; L-tryptophan degradation via kynurenine pathway; L-kynurenine from L-tryptophan: step 2/2. Functionally, catalyzes the hydrolysis of N-formyl-L-kynurenine to L-kynurenine, the second step in the kynurenine pathway of tryptophan degradation. The polypeptide is Kynurenine formamidase (Bacillus cytotoxicus (strain DSM 22905 / CIP 110041 / 391-98 / NVH 391-98)).